The following is a 148-amino-acid chain: IQ domain-containing protein F5 (148 aa).

2 consecutive IQ domains span residues 11-40 (ERSA…RAWI) and 67-96 (QEWA…AVRI).

In Homo sapiens (Human), this protein is IQ domain-containing protein F5 (IQCF5).